The following is a 484-amino-acid chain: Signal transduction histidine-protein kinase/phosphatase MprB (484 aa).

Over residues 1 to 10 the composition is skewed to low complexity; the sequence is MAADNAGRWP. Residues 1-23 form a disordered region; the sequence is MAADNAGRWPGQPPGPPAPTHPA. Residues 1–31 lie on the Cytoplasmic side of the membrane; the sequence is MAADNAGRWPGQPPGPPAPTHPASSVSLRWR. Positions 11–20 are enriched in pro residues; it reads GQPPGPPAPT. A helical membrane pass occupies residues 32–52; sequence VMLLAMSMVVISVVLMAVAVF. Over 53 to 172 the chain is Extracellular; sequence AVTSRALYDD…TGKVLKRLGT (120 aa). The chain crosses the membrane as a helical span at residues 173-193; that stretch reads VLLIVGGLGVAVAAIAGGMVA. In terms of domain architecture, HAMP spans 194–246; sequence SAGLRPVGRLTQAAERVARTDDLRPIPVIGNDELARLTETFNMMLRALAESRE. Topologically, residues 194–484 are cytoplasmic; it reads SAGLRPVGRL…SPAGSDEAER (291 aa). The Histidine kinase domain maps to 254–474; sequence DAGHELRTPL…AMHVVLPGRP (221 aa). The residue at position 257 (H257) is a Phosphohistidine; by autocatalysis.

The cofactor is Mg(2+). It depends on Mn(2+) as a cofactor. In terms of processing, autophosphorylated.

The protein localises to the cell membrane. The enzyme catalyses ATP + protein L-histidine = ADP + protein N-phospho-L-histidine.. Functionally, member of the two-component regulatory system MprB/MprA which contributes to maintaining a balance among several systems involved in stress resistance and is required for establishment and maintenance of persistent infection in the host. In response to environmental signals MprB acts both as a membrane-associated protein kinase that undergoes autophosphorylation and subsequently transfers the phosphate to MprA, and a protein phosphatase that dephosphorylates phospho-MprA. This is Signal transduction histidine-protein kinase/phosphatase MprB (mprB) from Mycolicibacterium vanbaalenii (strain DSM 7251 / JCM 13017 / BCRC 16820 / KCTC 9966 / NRRL B-24157 / PYR-1) (Mycobacterium vanbaalenii).